The primary structure comprises 80 residues: Small ribosomal subunit protein bS18A (80 aa).

Belongs to the bacterial ribosomal protein bS18 family. Part of the 30S ribosomal subunit. Forms a tight heterodimer with protein bS6.

Functionally, binds as a heterodimer with protein bS6 to the central domain of the 16S rRNA, where it helps stabilize the platform of the 30S subunit. This is Small ribosomal subunit protein bS18A from Rhodococcus jostii (strain RHA1).